A 246-amino-acid chain; its full sequence is Ubiquinone/menaquinone biosynthesis C-methyltransferase UbiE (246 aa).

S-adenosyl-L-methionine contacts are provided by residues threonine 75, aspartate 95, and 119-120; that span reads DA.

Belongs to the class I-like SAM-binding methyltransferase superfamily. MenG/UbiE family.

The catalysed reaction is a 2-demethylmenaquinol + S-adenosyl-L-methionine = a menaquinol + S-adenosyl-L-homocysteine + H(+). The enzyme catalyses a 2-methoxy-6-(all-trans-polyprenyl)benzene-1,4-diol + S-adenosyl-L-methionine = a 5-methoxy-2-methyl-3-(all-trans-polyprenyl)benzene-1,4-diol + S-adenosyl-L-homocysteine + H(+). The protein operates within quinol/quinone metabolism; menaquinone biosynthesis; menaquinol from 1,4-dihydroxy-2-naphthoate: step 2/2. It participates in cofactor biosynthesis; ubiquinone biosynthesis. Its function is as follows. Methyltransferase required for the conversion of demethylmenaquinol (DMKH2) to menaquinol (MKH2) and the conversion of 2-polyprenyl-6-methoxy-1,4-benzoquinol (DDMQH2) to 2-polyprenyl-3-methyl-6-methoxy-1,4-benzoquinol (DMQH2). This is Ubiquinone/menaquinone biosynthesis C-methyltransferase UbiE from Desulfotalea psychrophila (strain LSv54 / DSM 12343).